Reading from the N-terminus, the 241-residue chain is Beta-nerve growth factor (241 aa).

The signal sequence occupies residues 1–18; sequence MSMLFYTLITAFLIGIQA. Residues 19–121 constitute a propeptide that is removed on maturation; the sequence is EPHSESNVPA…PVNRTHRSKR (103 aa). 3 N-linked (GlcNAc...) asparagine glycosylation sites follow: asparagine 69, asparagine 114, and asparagine 166. 3 disulfides stabilise this stretch: cysteine 136–cysteine 201, cysteine 179–cysteine 229, and cysteine 189–cysteine 231.

Belongs to the NGF-beta family. Homodimer. The homodimer interacts with a single NTRK1 chain. The homodimer interacts with a single NGFR chain. The NGF dimer interacts with a single SORCS2 chain (via extracellular domain). The NGF precursor (proNGF) binds to a receptor complex formed by SORT1 and NGFR, which leads to NGF endocytosis. Both mature NGF and the immature NGF precursor (proNGF) interact with SORCS2 and with the heterodimer formed by SORCS2 and NGFR (via extracellular domains). The NGF precursor (proNGF) has much higher affinity for SORCS2 than mature NGF. The NGF precursor (proNGF) has much higher affinity for SORT1 than mature NGF. Interacts with ADAM10 in a divalent cation-dependent manner. Interacts with SORCS3.

It localises to the secreted. It is found in the endosome lumen. Nerve growth factor is important for the development and maintenance of the sympathetic and sensory nervous systems. Extracellular ligand for the NTRK1 and NGFR receptors, activates cellular signaling cascades through those receptor tyrosine kinase to regulate neuronal proliferation, differentiation and survival. Inhibits metalloproteinase dependent proteolysis of platelet glycoprotein VI. The protein is Beta-nerve growth factor (NGF) of Saimiri boliviensis boliviensis (Bolivian squirrel monkey).